Consider the following 238-residue polypeptide: Ion-translocating oxidoreductase complex subunit E (238 aa).

Transmembrane regions (helical) follow at residues 20 to 40 (ALVQ…VVNA), 41 to 61 (LGLG…VSLI), 72 to 92 (PAFV…MKAF), 95 to 115 (ELYQ…AVLG), 130 to 150 (AVDG…VGAV), and 185 to 205 (NVIF…LIAA).

The protein belongs to the NqrDE/RnfAE family. The complex is composed of six subunits: RnfA, RnfB, RnfC, RnfD, RnfE and RnfG.

The protein resides in the cell inner membrane. Part of a membrane-bound complex that couples electron transfer with translocation of ions across the membrane. This Cellvibrio japonicus (strain Ueda107) (Pseudomonas fluorescens subsp. cellulosa) protein is Ion-translocating oxidoreductase complex subunit E.